We begin with the raw amino-acid sequence, 588 residues long: uncharacterized protein (588 aa).

This is an uncharacterized protein from Schizosaccharomyces pombe (strain 972 / ATCC 24843) (Fission yeast).